A 510-amino-acid chain; its full sequence is Lysine--tRNA ligase (510 aa).

E420 and E427 together coordinate Mg(2+).

The protein belongs to the class-II aminoacyl-tRNA synthetase family. Homodimer. The cofactor is Mg(2+).

It localises to the cytoplasm. The enzyme catalyses tRNA(Lys) + L-lysine + ATP = L-lysyl-tRNA(Lys) + AMP + diphosphate. In Psychrobacter sp. (strain PRwf-1), this protein is Lysine--tRNA ligase.